We begin with the raw amino-acid sequence, 224 residues long: Oxalate oxidase 2 (224 aa).

An N-terminal signal peptide occupies residues 1–23 (MGYSKTLAVSLFAVLLLAPAVLA). The cysteines at positions 33 and 49 are disulfide-linked. The Cupin type-1 domain maps to 63-214 (SKLAKAGNTS…ALRVEAGVVE (152 aa)). Residues Asn-70 and Asn-75 are each glycosylated (N-linked (GlcNAc...) asparagine). The Mn(2+) site is built by His-111, His-113, Glu-118, and His-160.

The protein belongs to the germin family. As to quaternary structure, oligomer (believed to be a pentamer but probably hexamer). Post-translationally, glycosylated. A form called G contains antennary GlcNAc residues, whereas a form called G' lacks antennary GlcNAc residues in its otherwise identical glycans. In terms of tissue distribution, root.

Its subcellular location is the secreted. It is found in the extracellular space. It localises to the apoplast. The protein resides in the cell wall. It carries out the reaction oxalate + O2 + 2 H(+) = H2O2 + 2 CO2. Functionally, releases hydrogen peroxide in the apoplast. May play an important role in several aspects of plant growth and defense mechanisms. The sequence is that of Oxalate oxidase 2 from Hordeum vulgare (Barley).